Consider the following 529-residue polypeptide: Meiosis 1 arrest protein (529 aa).

Disordered regions lie at residues 180 to 201 and 504 to 529; these read KGIQERSDSPSPTEEPSNDESS and AASKASSAAFLPSDSEEGEEERPSHT. Positions 188–200 are enriched in polar residues; the sequence is SPSPTEEPSNDES. Serine 516 carries the post-translational modification Phosphoserine.

As to expression, expressed in germ cells of the testis. Expressed from spermatogonia to spermatids. Expressed at very low levels in lung, stomach, thymus. Not detected in Sertoli cells.

It localises to the cytoplasm. In terms of biological role, required for meiosis I progression during spermatogenesis. The polypeptide is Meiosis 1 arrest protein (M1ap) (Mus musculus (Mouse)).